The sequence spans 273 residues: UPF0380 protein YafZ (273 aa).

The protein belongs to the UPF0380 family.

In Escherichia coli (strain K12), this protein is UPF0380 protein YafZ (yafZ).